A 693-amino-acid polypeptide reads, in one-letter code: Cleavage and polyadenylation specificity factor subunit 3-I (693 aa).

Positions 81-86 (HFHIDH) match the HXHXDH motif motif.

The protein belongs to the metallo-beta-lactamase superfamily. RNA-metabolizing metallo-beta-lactamase-like family. INTS11 subfamily. As to quaternary structure, component of the CPSF complex, at least composed of CPSF160, CPSF100, CPSF73-I, CPSF73-II, CPSF30, FY and FIPS5. Interacts with CLPS3, CPSF100, CPSF160 and FY. In terms of tissue distribution, highly expressed in carpels. Also detected in seedlings, roots, stems, leaves, flowers and siliques.

It is found in the nucleus. In terms of biological role, component of the cleavage and polyadenylation specificity factor (CPSF) complex that play a key role in pre-mRNA 3'-end formation, recognizing the AAUAAA signal sequence and interacting with poly(A) polymerase and other factors to bring about cleavage and poly(A) addition. May function as mRNA 3'-end-processing endonuclease and also be involved in the histone 3'-end pre-mRNA processing. The sequence is that of Cleavage and polyadenylation specificity factor subunit 3-I (CPSF73-I) from Arabidopsis thaliana (Mouse-ear cress).